A 417-amino-acid polypeptide reads, in one-letter code: Glucose-1-phosphate adenylyltransferase (417 aa).

Alpha-D-glucose 1-phosphate-binding positions include Y105, G170, 185-186, and S203; that span reads EK.

This sequence belongs to the bacterial/plant glucose-1-phosphate adenylyltransferase family. As to quaternary structure, homotetramer.

The enzyme catalyses alpha-D-glucose 1-phosphate + ATP + H(+) = ADP-alpha-D-glucose + diphosphate. Its pathway is glycan biosynthesis; glycogen biosynthesis. Functionally, involved in the biosynthesis of ADP-glucose, a building block required for the elongation reactions to produce glycogen. Catalyzes the reaction between ATP and alpha-D-glucose 1-phosphate (G1P) to produce pyrophosphate and ADP-Glc. The protein is Glucose-1-phosphate adenylyltransferase of Granulibacter bethesdensis (strain ATCC BAA-1260 / CGDNIH1).